Consider the following 175-residue polypeptide: DPY30 domain-containing protein 1 (175 aa).

Residues 94-112 (QQKEKQKSEDFETGQEKSF) show a composition bias toward basic and acidic residues. Disordered regions lie at residues 94-134 (QQKE…QAEE) and 152-175 (APNL…SAPP).

Belongs to the dpy-30 family. In terms of assembly, component of the axonemal radial spoke complex 1 (RS1), at least composed of spoke head proteins RSPH1, RSPH3, RSPH9 and the cilia-specific component RSPH4A or sperm-specific component RSPH6A, spoke stalk proteins RSPH14, DNAJB13, DYDC1, ROPN1L and NME5, and the anchor protein IQUB. Interacts with SH3GL3.

The protein localises to the cytoplasm. The protein resides in the cytoskeleton. It localises to the flagellum axoneme. Functions as part of axonemal radial spoke complexes that play an important part in the motility of sperm and cilia. Plays a crucial role during acrosome biogenesis. The protein is DPY30 domain-containing protein 1 (Dydc1) of Mus musculus (Mouse).